The primary structure comprises 40 residues: Omega-conotoxin RsXXVIA (40 aa).

Post-translationally, contains 4 disulfide bonds. Expressed by the venom duct.

The protein localises to the secreted. Its function is as follows. Omega-conotoxins act at presynaptic membranes, they bind and block voltage-gated calcium channels (Cav). This toxin inhibits rat Cav2.2/CACNA1B calcium channels in a dose-dependent manner (EC(50)=2.8 uM), whose effect is partially reversed after washing. In vivo, when injected into mice, it shows both an analgesic effect in acute thermal pain at 30 and 45 minutes post-injection and an anti-nociceptive effect in a formalin chronic pain test. The protein is Omega-conotoxin RsXXVIA of Conus regularis (Regular cone).